Consider the following 385-residue polypeptide: Glucose-fructose oxidoreductase domain-containing protein 2 (385 aa).

An N-terminal signal peptide occupies residues 1-25; sequence MKMLPGVGVFGTGSSARVLVPLLRA.

This sequence belongs to the Gfo/Idh/MocA family.

Its subcellular location is the secreted. The protein resides in the extracellular space. It localises to the extracellular matrix. Its function is as follows. Promotes matrix assembly. This Bos taurus (Bovine) protein is Glucose-fructose oxidoreductase domain-containing protein 2 (GFOD2).